The primary structure comprises 525 residues: Ribonuclease Y (525 aa).

Residues 3 to 23 (IFFISLVLIVLASVVFFVGGF) form a helical membrane-spanning segment. The 86-residue stretch at 215–300 (ALSVVHIQSD…KAYEDAKKEI (86 aa)) folds into the KH domain. The HD domain occupies 341-433 (LLQHSREVAM…VDAANVISLS (93 aa)).

The protein belongs to the RNase Y family.

It localises to the cell membrane. Endoribonuclease that initiates mRNA decay. In Chlorobium phaeobacteroides (strain DSM 266 / SMG 266 / 2430), this protein is Ribonuclease Y.